A 237-amino-acid chain; its full sequence is CD209 antigen-like protein D (237 aa).

Residues 1–54 lie on the Cytoplasmic side of the membrane; the sequence is MSDSMESKTQQVVIPEDEECLMSGTRYSDISSRLQTKFGIKSLAEYTKQSRNPL. The chain crosses the membrane as a helical; Signal-anchor for type II membrane protein span at residues 55–75; it reads VLQLLSFLFLAGLLLIILILV. Residues 76-237 are Extracellular-facing; sequence SKVPSSEVQN…KVSTSSCTTK (162 aa). Cys106 and Cys117 are disulfide-bonded. Positions 112-227 constitute a C-type lectin domain; sequence FFNGSCYFFS…CDKLLFWICK (116 aa). N-linked (GlcNAc...) asparagine glycosylation is found at Asn114 and Asn129. 2 cysteine pairs are disulfide-bonded: Cys134–Cys226 and Cys205–Cys218. Ca(2+) contacts are provided by Glu196, Asn198, Glu203, Asn214, and Asp215.

Its subcellular location is the membrane. Its function is as follows. Probable pathogen-recognition receptor. May mediate the endocytosis of pathogens which are subsequently degraded in lysosomal compartments. May recognize in a calcium-dependent manner high mannose N-linked oligosaccharides in a variety of pathogen antigens. In Mus musculus (Mouse), this protein is CD209 antigen-like protein D (Cd209d).